A 500-amino-acid chain; its full sequence is Sodium/potassium/calcium exchanger 5 (500 aa).

The first 29 residues, 1 to 29 (MQTKGGQTWARRALLLGILWATAHLPLSG), serve as a signal peptide directing secretion. Over 30-66 (TSLPQRLPRATGNSTQCVISPSSEFPEGFFTRQERRD) the chain is Extracellular. Residues 67–87 (GGIIIYFLIIVYMFMAISIVC) traverse the membrane as a helical segment. The Cytoplasmic portion of the chain corresponds to 88 to 111 (DEYFLPSLEIISESLGLSQDVAGT). The helical transmembrane segment at 112–132 (TFMAAGSSAPELVTAFLGVFI) threads the bilayer. The Extracellular portion of the chain corresponds to 133-136 (TKGD). The chain crosses the membrane as a helical span at residues 137–157 (IGISTILGSAIYNLLGICAAC). The Cytoplasmic segment spans residues 158–169 (GLLSNTVSTLSC). Residues 170-190 (WPLFRDCAAYTISAAAVLGII) form a helical membrane-spanning segment. Residues 191 to 195 (YDNQV) lie on the Extracellular side of the membrane. Residues 196 to 216 (YWYEGALLLLIYGLYVLVLCF) traverse the membrane as a helical segment. The Cytoplasmic segment spans residues 217 to 302 (DIKINQYIIK…PSVFNMPEAD (86 aa)). The chain crosses the membrane as a helical span at residues 303–323 (LKRIFWVLSLPIITLLFLTTP). At 324–333 (DCRKKFWKNY) the chain is on the extracellular side. A helical membrane pass occupies residues 334-354 (FVITFFMSAIWISAFTYILVW). Over 355-368 (MVTITGETLEIPDT) the chain is Cytoplasmic. Residues 369–389 (VMGLTLLAAGTSIPDTIASVL) traverse the membrane as a helical segment. At 390-399 (VARKGKGDMA) the chain is on the extracellular side. A helical membrane pass occupies residues 400–420 (MSNIVGSNVFDMLCLGIPWFI). At 421-437 (KTAFINGSAPAEVNSRG) the chain is on the cytoplasmic side. Residues 438 to 458 (LTYITISLNISIIFLFLAVHF) traverse the membrane as a helical segment. At 459-468 (NGWKLDRKLG) the chain is on the extracellular side. A helical transmembrane segment spans residues 469-489 (IVCLLSYLGLATLSVLYELGI). At 490–500 (IGNNKIRGCGG) the chain is on the cytoplasmic side.

The protein belongs to the Ca(2+):cation antiporter (CaCA) (TC 2.A.19) family. SLC24A subfamily.

Its subcellular location is the golgi apparatus. The protein resides in the trans-Golgi network membrane. The protein localises to the melanosome. It catalyses the reaction Ca(2+)(out) + K(+)(out) + 4 Na(+)(in) = Ca(2+)(in) + K(+)(in) + 4 Na(+)(out). Functionally, calcium, potassium:sodium antiporter that transports 1 Ca(2+) and 1 K(+) to the melanosome in exchange for 4 cytoplasmic Na(+). Involved in pigmentation, possibly by participating in ion transport in melanosomes. Predominant sodium-calcium exchanger in melanocytes. The protein is Sodium/potassium/calcium exchanger 5 of Homo sapiens (Human).